Consider the following 694-residue polypeptide: ATP-dependent RNA helicase DHX33 (694 aa).

The Helicase ATP-binding domain occupies 78 to 246; it reads LKELEANDTV…FNCKGMYLEG (169 aa). ATP is bound at residue 91–98; the sequence is SETGSGKT. The DEAH box motif lies at 188–191; that stretch reads DEAH. The 174-residue stretch at 270 to 443 folds into the Helicase C-terminal domain; the sequence is TLFHIHRTTP…SMVLQLLALD (174 aa).

It belongs to the DEAD box helicase family. DEAH subfamily.

The protein localises to the nucleus. The protein resides in the nucleolus. It carries out the reaction ATP + H2O = ADP + phosphate + H(+). Its function is as follows. Part of a translational control module, also containing pths/DDX47 and ais/DDX52, which coordinates germline stem cell differentiation with ribosome biogenesis during oogenesis. This module allows for coregulation of ribosomal proteins and non1/GTPBP4, a p53 repressor, preventing p53 stabilization, cell cycle arrest and loss of stem cell differentiation. In Drosophila melanogaster (Fruit fly), this protein is ATP-dependent RNA helicase DHX33.